Consider the following 469-residue polypeptide: Glutamate--tRNA ligase 1 (469 aa).

The short motif at 11-21 (PSPTGHLHLGG) is the 'HIGH' region element. The short motif at 238 to 242 (KLSKR) is the 'KMSKS' region element. Lys-241 lines the ATP pocket.

Belongs to the class-I aminoacyl-tRNA synthetase family. Glutamate--tRNA ligase type 1 subfamily. As to quaternary structure, monomer.

The protein resides in the cytoplasm. The catalysed reaction is tRNA(Glu) + L-glutamate + ATP = L-glutamyl-tRNA(Glu) + AMP + diphosphate. In terms of biological role, catalyzes the attachment of glutamate to tRNA(Glu) in a two-step reaction: glutamate is first activated by ATP to form Glu-AMP and then transferred to the acceptor end of tRNA(Glu). This is Glutamate--tRNA ligase 1 from Ehrlichia canis (strain Jake).